Here is a 160-residue protein sequence, read N- to C-terminus: Eukaryotic translation initiation factor 5A-4 (160 aa).

Positions 1–12 (MSDEEHHFESKA) are enriched in basic and acidic residues. Residues 1–21 (MSDEEHHFESKADAGASKTYP) are disordered. The residue at position 52 (K52) is a Hypusine.

The protein belongs to the eIF-5A family. In terms of processing, lys-52 undergoes hypusination, a unique post-translational modification that consists in the addition of a butylamino group from spermidine to lysine side chain, leading to the formation of the unusual amino acid hypusine. eIF-5As are the only known proteins to undergo this modification, which is essential for their function.

Its function is as follows. Translation factor that promotes translation elongation and termination, particularly upon ribosome stalling at specific amino acid sequence contexts. Binds between the exit (E) and peptidyl (P) site of the ribosome and promotes rescue of stalled ribosome: specifically required for efficient translation of polyproline-containing peptides as well as other motifs that stall the ribosome. Acts as a ribosome quality control (RQC) cofactor by joining the RQC complex to facilitate peptidyl transfer during CAT tailing step. The chain is Eukaryotic translation initiation factor 5A-4 from Solanum lycopersicum (Tomato).